The following is a 464-amino-acid chain: F-box/FBD/LRR-repeat protein At1g80470 (464 aa).

The F-box domain maps to 15-62; that stretch reads DWISGLADDLLLQILSKVPTRESVFTSRMSKRWRNLWRHVPALDLDSS. LRR repeat units lie at residues 96–122, 123–150, 152–178, 197–222, 223–249, and 273–298; these read EEHCDPEFVSRIDHVVKRGLKDLTILS, KVNIEDDSVRMPVSLYSCATLVNLTLYS, VFDAPRAQLVSLPCLKTMHLEAVKFDG, IITHDHDELGDVSVRSPSLRRFKLES, MREDYDECEDPNVEVDTPGLEYMSITD, and DAEDEDSVIHDFITAISTVRELTISA. In terms of domain architecture, FBD spans 359–413; that stretch reads KEEINLSLVPHCFESSLEYVQLKVPITVSETSSKMELAIYFVRNCSVLKKLMLNE.

This Arabidopsis thaliana (Mouse-ear cress) protein is F-box/FBD/LRR-repeat protein At1g80470.